A 125-amino-acid chain; its full sequence is Aspercryptin biosynthesis cluster protein K (125 aa).

Residues 104 to 125 are disordered; that stretch reads QRAESVAGDSRPREHRQGAVGY. The span at 113–125 shows a compositional bias: basic and acidic residues; that stretch reads SRPREHRQGAVGY.

The protein operates within secondary metabolite biosynthesis. In terms of biological role, part of the gene cluster that mediates the biosynthesis of aspercryptins, linear lipopeptides built from six amino acids including 2 highly unusual and nonproteogenic amino acids, 2-amino-octanoic acid (2aoa) and 2-amino-dodecanol (2adol). The core structure of aspercryptins is as follows: Ser/Ala-Thr-Ile/Val-2aoa-Asn-2adol. The first step of aspercryptin biosynthesis is the generation of the fatty acid precursors, octanoic and dodecanoic acids, by the FAS subunits atnF and atnM. The fatty acid precursors are likely transformed into the corresponding alpha-amino fatty acids in three steps. First, they are hydroxylated by the cytochrome P450 monooxygenase atnE, then oxidized to the corresponding alpha-keto acids by the NAD(P)-dependent oxidoreductase atnD, and finally converted to the alpha-amino fatty acids by the PLP-dependent aminotransferases atnH or atnJ. the alpha-amino fatty acids, 2-amino-octanoic and 2-amino-dodecanoic acids, are recognized, activated, and covalently tethered to the NRPS atnA by its fourth and sixth adenylation domains. The second module of atnA is the Thr module and contains an epimerase (E) domain responsible for the epimerization of Thr to D-allo-Thr. Additionally, despite atnA having only one epimerase domain, the first amino acid of aspercryptin A1 is D-Ser, suggesting that serine is either loaded directly as D-Ser on the first module or that the epimerase domain in the threonine module epimerizes both L-Ser and L-Thr. After condensation of the hexapeptide of aspercryptin, the C-terminal reductase (TE) domain might be involved in the reductive release and production of the aldehyde hexapeptide. Further reduction would generate aspercryptins. The variety of aspercryptins produced reflects the flexibility of the atnA NRPS, allowing incorporation of alanine instead of serine, valine for isoleucine, and a C10 fatty amino alcohol instead of the C12 version. AtnB seems to be involved in the selectivity for Ile versus Val by the third module. Moreover, type B, C and D aspercryptins have an additional N-terminal cichorine, acetyl and propionyl group respectively. In Emericella nidulans (strain FGSC A4 / ATCC 38163 / CBS 112.46 / NRRL 194 / M139) (Aspergillus nidulans), this protein is Aspercryptin biosynthesis cluster protein K.